The sequence spans 306 residues: Phenylcoumaran benzylic ether reductase IRL1 (306 aa).

Residues 10-16 (GATGYIG), arginine 35, and lysine 44 contribute to the NADP(+) site. Residue lysine 132 is the Proton acceptor of the active site. Arginine 136 contacts NADP(+).

It belongs to the NmrA-type oxidoreductase family. Isoflavone reductase subfamily. In terms of tissue distribution, highly expressed in sclerotesta. Expressed in roots, and two-to-four year stems.

It carries out the reaction (-)-dehydrodiconiferyl alcohol + NADPH + H(+) = (S)-isodihydrodehydrodiconiferyl alcohol + NADP(+). The enzyme catalyses (+)-dehydrodiconiferyl alcohol + NADPH + H(+) = (R)-isodihydrodehydrodiconiferyl alcohol + NADP(+). The catalysed reaction is (2R,3S)-dihydrodehydrodiconiferyl alcohol + NADPH + H(+) = (S)-tetrahydrodehydrodiconiferyl alcohol + NADP(+). It catalyses the reaction (2S,3R)-dihydrodehydrodiconiferyl alcohol + NADPH + H(+) = (R)-tetrahydrodehydrodiconiferyl alcohol + NADP(+). Oxidoreductase involved in lignan biosynthesis. Catalyzes the NADPH-dependent reduction of phenylcoumaran benzylic ethers. Converts dehydrodiconiferyl alcohol (DDC) to isodihydrodehydrodiconiferyl alcohol (IDDDC), and dihydrodehydrodiconiferyl alcohol (DDDC) to tetrahydrodehydrodiconiferyl alcohol (TDDC). May regulate changes in lignin content and accumulation of flavonoids. This chain is Phenylcoumaran benzylic ether reductase IRL1, found in Ginkgo biloba (Ginkgo).